The chain runs to 688 residues: Glycine--tRNA ligase beta subunit (688 aa).

Belongs to the class-II aminoacyl-tRNA synthetase family. In terms of assembly, tetramer of two alpha and two beta subunits.

Its subcellular location is the cytoplasm. The enzyme catalyses tRNA(Gly) + glycine + ATP = glycyl-tRNA(Gly) + AMP + diphosphate. The polypeptide is Glycine--tRNA ligase beta subunit (Aliivibrio salmonicida (strain LFI1238) (Vibrio salmonicida (strain LFI1238))).